Here is a 223-residue protein sequence, read N- to C-terminus: Agamous-like MADS-box protein AGL11 (223 aa).

One can recognise an MADS-box domain in the interval 1–61 (MGRGKIEIKR…GRVYEYSNNN (61 aa)). A K-box domain is found at 87–177 (AQYYQQESAK…RTKIAEVERL (91 aa)).

Expressed in flowers and seeds. Expressed in endotesta cell layer of developing seeds.

It localises to the nucleus. Functionally, probable transcription factor involved in seed development. Plays a role in seed morphogenesis by promoting the correct development of endotesta cell layer, which directs the further development of the seed coat, the endosperm, and consequently the embryo. The protein is Agamous-like MADS-box protein AGL11 of Vitis vinifera (Grape).